A 149-amino-acid polypeptide reads, in one-letter code: Large ribosomal subunit protein eL24B (149 aa).

Ser-50 is modified (phosphoserine). The tract at residues 96-149 is disordered; it reads QRPEVRAAARAAALKQRKDKRAASESEKKAIKAKSAASSARGQAIKNAKVAARR. Positions 116–125 are enriched in basic and acidic residues; the sequence is RAASESEKKA.

This sequence belongs to the eukaryotic ribosomal protein eL24 family. In terms of assembly, component of the large ribosomal subunit (LSU). Mature yeast ribosomes consist of a small (40S) and a large (60S) subunit. The 40S small subunit contains 1 molecule of ribosomal RNA (18S rRNA) and at least 33 different proteins. The large 60S subunit contains 3 rRNA molecules (25S, 5.8S and 5S rRNA) and at least 46 different proteins.

The protein resides in the cytoplasm. Functionally, component of the ribosome, a large ribonucleoprotein complex responsible for the synthesis of proteins in the cell. The small ribosomal subunit (SSU) binds messenger RNAs (mRNAs) and translates the encoded message by selecting cognate aminoacyl-transfer RNA (tRNA) molecules. The large subunit (LSU) contains the ribosomal catalytic site termed the peptidyl transferase center (PTC), which catalyzes the formation of peptide bonds, thereby polymerizing the amino acids delivered by tRNAs into a polypeptide chain. The nascent polypeptides leave the ribosome through a tunnel in the LSU and interact with protein factors that function in enzymatic processing, targeting, and the membrane insertion of nascent chains at the exit of the ribosomal tunnel. In Schizosaccharomyces pombe (strain 972 / ATCC 24843) (Fission yeast), this protein is Large ribosomal subunit protein eL24B (rpl2402).